A 239-amino-acid chain; its full sequence is Methylthioribulose-1-phosphate dehydratase (239 aa).

Cys94 serves as a coordination point for substrate. Residues His112 and His114 each contribute to the Zn(2+) site. Glu136 functions as the Proton donor/acceptor in the catalytic mechanism. A Zn(2+)-binding site is contributed by His192.

The protein belongs to the aldolase class II family. MtnB subfamily. Zn(2+) is required as a cofactor.

Its subcellular location is the cytoplasm. It carries out the reaction 5-(methylsulfanyl)-D-ribulose 1-phosphate = 5-methylsulfanyl-2,3-dioxopentyl phosphate + H2O. It participates in amino-acid biosynthesis; L-methionine biosynthesis via salvage pathway; L-methionine from S-methyl-5-thio-alpha-D-ribose 1-phosphate: step 2/6. Its function is as follows. Catalyzes the dehydration of methylthioribulose-1-phosphate (MTRu-1-P) into 2,3-diketo-5-methylthiopentyl-1-phosphate (DK-MTP-1-P). Functions in the methionine salvage pathway. May play a role in apoptosis. The protein is Methylthioribulose-1-phosphate dehydratase of Aquarana catesbeiana (American bullfrog).